The following is a 232-amino-acid chain: 5'-methylthioadenosine/S-adenosylhomocysteine nucleosidase (232 aa).

Catalysis depends on Glu12, which acts as the Proton acceptor. Residues Gly78, Ile152, and 173-174 contribute to the substrate site; that span reads ME. Asp197 functions as the Proton donor in the catalytic mechanism.

It belongs to the PNP/UDP phosphorylase family. MtnN subfamily. As to quaternary structure, homodimer.

It catalyses the reaction S-adenosyl-L-homocysteine + H2O = S-(5-deoxy-D-ribos-5-yl)-L-homocysteine + adenine. The catalysed reaction is S-methyl-5'-thioadenosine + H2O = 5-(methylsulfanyl)-D-ribose + adenine. The enzyme catalyses 5'-deoxyadenosine + H2O = 5-deoxy-D-ribose + adenine. It participates in amino-acid biosynthesis; L-methionine biosynthesis via salvage pathway; S-methyl-5-thio-alpha-D-ribose 1-phosphate from S-methyl-5'-thioadenosine (hydrolase route): step 1/2. Catalyzes the irreversible cleavage of the glycosidic bond in both 5'-methylthioadenosine (MTA) and S-adenosylhomocysteine (SAH/AdoHcy) to adenine and the corresponding thioribose, 5'-methylthioribose and S-ribosylhomocysteine, respectively. Also cleaves 5'-deoxyadenosine, a toxic by-product of radical S-adenosylmethionine (SAM) enzymes, into 5-deoxyribose and adenine. Thus, is required for in vivo function of the radical SAM enzymes biotin synthase and lipoic acid synthase, that are inhibited by 5'-deoxyadenosine accumulation. This Salmonella paratyphi B (strain ATCC BAA-1250 / SPB7) protein is 5'-methylthioadenosine/S-adenosylhomocysteine nucleosidase.